A 345-amino-acid polypeptide reads, in one-letter code: Heat-inducible transcription repressor HrcA (345 aa).

This sequence belongs to the HrcA family.

In terms of biological role, negative regulator of class I heat shock genes (grpE-dnaK-dnaJ and groELS operons). Prevents heat-shock induction of these operons. The protein is Heat-inducible transcription repressor HrcA of Listeria welshimeri serovar 6b (strain ATCC 35897 / DSM 20650 / CCUG 15529 / CIP 8149 / NCTC 11857 / SLCC 5334 / V8).